Reading from the N-terminus, the 174-residue chain is Trypsin inhibitor (174 aa).

Cystine bridges form between cysteine 40–cysteine 86 and cysteine 131–cysteine 140.

The protein belongs to the protease inhibitor I3 (leguminous Kunitz-type inhibitor) family. Heterodimer of an alpha and a beta chain linked by a disulfide bond.

Inhibits trypsin and chymotrypsin with a 1:1 stoichiometry, with dissociation constants of 1.56 nM and 120 nM respectively. Inhibits plasma kallikrein, factor XIIa and plasmin with dissociation constants of 5.0 nM, 150 nM and 18 nM respectively. Does not inhibit factor Xa, thrombin, tissue kallikrein or cysteine proteinases such as papain and bromelain. This is Trypsin inhibitor from Enterolobium contortisiliquum (Pacara earpod tree).